Reading from the N-terminus, the 130-residue chain is 3-aminoacrylate deaminase RutC (130 aa).

It belongs to the RutC family.

It carries out the reaction (Z)-3-aminoacrylate + H2O + H(+) = 3-oxopropanoate + NH4(+). In terms of biological role, involved in pyrimidine catabolism. Catalyzes the deamination of 3-aminoacrylate to malonic semialdehyde, a reaction that can also occur spontaneously. RutC may facilitate the reaction and modulate the metabolic fitness, rather than catalyzing essential functions. This is 3-aminoacrylate deaminase RutC from Methylorubrum extorquens (strain CM4 / NCIMB 13688) (Methylobacterium extorquens).